The following is a 162-amino-acid chain: Transcription elongation factor GreA (162 aa).

The stretch at 45 to 74 (ENAEYEAAREKQAFIEGRIKELEDMTARAE) forms a coiled coil.

This sequence belongs to the GreA/GreB family.

In terms of biological role, necessary for efficient RNA polymerase transcription elongation past template-encoded arresting sites. The arresting sites in DNA have the property of trapping a certain fraction of elongating RNA polymerases that pass through, resulting in locked ternary complexes. Cleavage of the nascent transcript by cleavage factors such as GreA or GreB allows the resumption of elongation from the new 3'terminus. GreA releases sequences of 2 to 3 nucleotides. This chain is Transcription elongation factor GreA, found in Rickettsia conorii (strain ATCC VR-613 / Malish 7).